A 56-amino-acid polypeptide reads, in one-letter code: uncharacterized protein (56 aa).

This is an uncharacterized protein from Schizosaccharomyces pombe (strain 972 / ATCC 24843) (Fission yeast).